Here is a 144-residue protein sequence, read N- to C-terminus: MAARNTARKRAFQILFEGDQRGVDVLTVLADWIRHSRTDTRQPPVSEYTMQLVEGYAKKVNRIDELISQYAVGWTLDRMPVVDRNILRLGTYELLWVDETPDAVVLDEAVQLAKEFSTDDSPAFVNGLLGRLKELKPSLRREEA.

The protein belongs to the NusB family.

Its function is as follows. Involved in transcription antitermination. Required for transcription of ribosomal RNA (rRNA) genes. Binds specifically to the boxA antiterminator sequence of the ribosomal RNA (rrn) operons. In Streptomyces avermitilis (strain ATCC 31267 / DSM 46492 / JCM 5070 / NBRC 14893 / NCIMB 12804 / NRRL 8165 / MA-4680), this protein is Transcription antitermination protein NusB.